The sequence spans 65 residues: MPKMKTHRGAAKRFKKTGTGKIVRHHAFTSHILEKKSPKRKRNLRKGTVMHKTDAKRIARLVAYL.

It belongs to the bacterial ribosomal protein bL35 family.

This Desulfitobacterium hafniense (strain DSM 10664 / DCB-2) protein is Large ribosomal subunit protein bL35.